A 359-amino-acid chain; its full sequence is Peptide chain release factor 1 (359 aa).

The residue at position 235 (Gln235) is an N5-methylglutamine. The interval 280-306 (AERQRADSERSADRKSQVGSGDRSERI) is disordered.

The protein belongs to the prokaryotic/mitochondrial release factor family. Methylated by PrmC. Methylation increases the termination efficiency of RF1.

It is found in the cytoplasm. Peptide chain release factor 1 directs the termination of translation in response to the peptide chain termination codons UAG and UAA. In Rhizobium johnstonii (strain DSM 114642 / LMG 32736 / 3841) (Rhizobium leguminosarum bv. viciae), this protein is Peptide chain release factor 1.